A 126-amino-acid chain; its full sequence is MQRTMLRGKLHRVHVTQVDLHYEGSCAIDQDFLDAAGILEYEAIDIYNVDNGQRFSTYAIAAERGSRIISVNGAAARCACVGDLLIICAYVQMPDEEARHHAPRVAYFDQHNQLQRTAKALPVQMA.

Ser-25 functions as the Schiff-base intermediate with substrate; via pyruvic acid in the catalytic mechanism. Position 25 is a pyruvic acid (Ser) (Ser-25). Substrate is bound at residue Thr-57. Tyr-58 functions as the Proton donor in the catalytic mechanism. A substrate-binding site is contributed by 73-75 (GAA).

The protein belongs to the PanD family. In terms of assembly, heterooctamer of four alpha and four beta subunits. It depends on pyruvate as a cofactor. Post-translationally, is synthesized initially as an inactive proenzyme, which is activated by self-cleavage at a specific serine bond to produce a beta-subunit with a hydroxyl group at its C-terminus and an alpha-subunit with a pyruvoyl group at its N-terminus.

It localises to the cytoplasm. The catalysed reaction is L-aspartate + H(+) = beta-alanine + CO2. Its pathway is cofactor biosynthesis; (R)-pantothenate biosynthesis; beta-alanine from L-aspartate: step 1/1. Functionally, catalyzes the pyruvoyl-dependent decarboxylation of aspartate to produce beta-alanine. In Sodalis glossinidius (strain morsitans), this protein is Aspartate 1-decarboxylase.